The following is a 563-amino-acid chain: NAD(P)H-quinone oxidoreductase chain 4 (563 aa).

The next 15 helical transmembrane spans lie at Phe-25–Ile-45, Trp-56–Gly-76, Val-90–Pro-110, Leu-111–Phe-131, Pro-133–Val-153, Leu-157–Trp-177, Phe-189–Phe-209, Gly-230–Val-250, Thr-264–Met-284, Phe-298–Phe-318, Met-335–Leu-355, Gln-356–Asp-376, Phe-397–Val-417, Ile-438–Met-458, and Val-485–Met-505.

It belongs to the complex I subunit 4 family.

The protein resides in the cellular thylakoid membrane. It catalyses the reaction a plastoquinone + NADH + (n+1) H(+)(in) = a plastoquinol + NAD(+) + n H(+)(out). The catalysed reaction is a plastoquinone + NADPH + (n+1) H(+)(in) = a plastoquinol + NADP(+) + n H(+)(out). Its function is as follows. NDH-1 shuttles electrons from NAD(P)H, via FMN and iron-sulfur (Fe-S) centers, to quinones in the respiratory chain. The immediate electron acceptor for the enzyme in this species is believed to be plastoquinone. Couples the redox reaction to proton translocation (for every two electrons transferred, four hydrogen ions are translocated across the cytoplasmic membrane), and thus conserves the redox energy in a proton gradient. This chain is NAD(P)H-quinone oxidoreductase chain 4, found in Prochlorococcus marinus (strain MIT 9303).